The primary structure comprises 239 residues: DNA repair protein RecO (239 aa).

This sequence belongs to the RecO family.

In terms of biological role, involved in DNA repair and RecF pathway recombination. The chain is DNA repair protein RecO from Glaesserella parasuis serovar 5 (strain SH0165) (Haemophilus parasuis).